Consider the following 380-residue polypeptide: Alpha-N-acetylneuraminate alpha-2,8-sialyltransferase ST8SIA3 (380 aa).

Topologically, residues 1-9 are cytoplasmic; that stretch reads MRNCKMARV. The chain crosses the membrane as a helical; Signal-anchor for type II membrane protein span at residues 10-33; the sequence is ASVLGLVMLSVALLNLSLISYVSL. Topologically, residues 34–380 are lumenal; it reads KKENIFATPK…LTKLTLSHCA (347 aa). Residues Asn93 and Asn113 are each glycosylated (N-linked (GlcNAc...) asparagine). Intrachain disulfides connect Cys162–Cys313 and Cys176–Cys379. CMP-N-acetyl-beta-neuraminate is bound by residues Asn167 and Asn190. An N-linked (GlcNAc...) asparagine glycan is attached at Asn206. CMP-N-acetyl-beta-neuraminate contacts are provided by Ser300, Thr301, Gly302, Trp322, Tyr336, and His337. The active-site Proton donor/acceptor is His354.

Belongs to the glycosyltransferase 29 family. In terms of assembly, homodimer. Autopolysialylated.

It localises to the golgi apparatus membrane. It catalyses the reaction [N-acetyl-alpha-D-neuraminosyl-(2-&gt;8)](n) + CMP-N-acetyl-beta-neuraminate = [N-acetyl-alpha-D-neuraminosyl-(2-&gt;8)](n+1) + CMP + H(+). It carries out the reaction alpha-Neu5Ac-(2-&gt;3)-beta-D-Gal-(1-&gt;4)-6S-D-GlcNAc + CMP-N-acetyl-beta-neuraminate = alpha-Neu5Ac-(2-&gt;8)-alpha-Neu5Ac-(2-&gt;3)-beta-D-Gal-(1-&gt;4)-6S-D-GlcNAc + CMP + H(+). The catalysed reaction is a ganglioside GM3 (d18:1(4E)) + CMP-N-acetyl-beta-neuraminate = a ganglioside GD3 (d18:1(4E)) + CMP + H(+). The enzyme catalyses a ganglioside GM3 + CMP-N-acetyl-beta-neuraminate = a ganglioside GD3 + CMP + H(+). It catalyses the reaction an N-acetyl-alpha-neuraminyl-(2-&gt;3)-beta-D-galactosyl derivative + CMP-N-acetyl-beta-neuraminate = an N-acetyl-alpha-neuraminyl-(2-&gt;8)-N-acetyl-alpha-neuraminyl-(2-&gt;3)-beta-D-galactosyl derivative + CMP + H(+). It carries out the reaction an N-acetyl-alpha-neuraminyl-(2-&gt;3)-beta-D-galactosyl-(1-&gt;4)-N-acetyl-beta-D-glucosaminyl derivative + CMP-N-acetyl-beta-neuraminate = an alpha-Neu5Ac-(2-&gt;8)-alpha-Neu5Ac-(2-&gt;3)-beta-D-Gal-(1-&gt;4)-beta-D-GlcNAc derivative + CMP + H(+). It functions in the pathway protein modification; protein glycosylation. Catalyzes the transfer of sialic acid from a CMP-linked sialic acid donor onto a terminal alpha-2,3-, alpha-2,6-, or alpha-2,8-linked sialic acid of an acceptor, such as N-linked oligosaccharides of glycoproteins and glycolipids through alpha-2,8-linkages. Forms oligosialic and polysialic acid on various sialylated N-acetyllactosamine oligosaccharides of glycoproteins, including FETUB N-glycans, a2-HS-glycoprotein (AHSG) and alpha 2,3-sialylated glycosphingolipids, such as alpha 2,3-sialylparagloboside and ganglioside GM3 and to a lesser extent NCAM1 N-glycans. However, it is much more specific to N-linked oligosaccharides of glycoproteins than glycosphingolipids. 2,3-sialylparagloboside serves as the best acceptor substrate among the glycolipids. alpha-Neu5Ac-(2-&gt;8)-alpha-Neu5Ac-(2-&gt;3)-beta-D-Gal-(1-&gt;4)-6S-D-GlcNAc and monosialyl and disialyl N-acetyllactosamines are the best acceptor substrates among glycoproteins. May plays critical role in the striatum by mediating the formation of disialylated and trisialylated terminal glycotopes on N- and O-glycans of specific striatal proteins, regulating their distribution in lipid rafts, affecting their interaction with other binding partners, and subsequently modulating striatal functions. The protein is Alpha-N-acetylneuraminate alpha-2,8-sialyltransferase ST8SIA3 of Pan troglodytes (Chimpanzee).